A 269-amino-acid polypeptide reads, in one-letter code: Transcription factor MYB7 (269 aa).

HTH myb-type domains lie at 9–61 (KEHM…INYL) and 62–116 (RPDL…KRKL). 2 consecutive DNA-binding regions (H-T-H motif) follow at residues 37–61 (WRSL…INYL) and 89–112 (WSLI…NTHI).

In terms of assembly, interacts with SAD2. As to expression, expressed in anthers. Expressed in pollen grains and mature seeds. Expressed in roots and vasculature of leaves.

Its subcellular location is the nucleus. Transcription factor involved in the negative regulation of flavonol biosynthesis. Represses the early phenylpropanoid genes, phenylalanine ammonia-lyase (PAL), cinnamate 4-hydroxylase (C4H) and 4-coumarate-CoA ligase (4CL), as well as the flavonoid-specific genes, flavonoid 3'-hydroxylase (F3'H) and dihydroflavonol 4-reductase (DFR). Plays a role in seed germination inhibition. Negatively regulates the expression of the abscisic acid (ABA) signaling transcription factor ABI5 in seeds. This is Transcription factor MYB7 from Arabidopsis thaliana (Mouse-ear cress).